A 213-amino-acid chain; its full sequence is Sclerostin (213 aa).

The signal sequence occupies residues 1–23 (MQLPLALCLVCLLVHAAFRVVEG). The segment at 41-71 (GEYPEPPPELENNKTMNRAENGGRPPHHPFE) is disordered. Residue N53 is glycosylated (N-linked (GlcNAc...) asparagine). 4 cysteine pairs are disulfide-bonded: C80–C134, C94–C148, C105–C165, and C109–C167. The 91-residue stretch at 82–172 (ELHFTRYVTD…ASCKCKRLTR (91 aa)) folds into the CTCK domain. The N-linked (GlcNAc...) asparagine glycan is linked to N175. Residues 178-213 (ELKDFGPEAARPQKGRKPRPRARGAKANQAELENAY) are disordered. A compositionally biased stretch (basic residues) spans 190–201 (QKGRKPRPRARG).

The protein belongs to the sclerostin family. Interacts with LRP4 (via the extracellular domain); the interaction facilitates the inhibition of Wnt signaling. Interacts with LRP5 (via the first two YWTD-EGF repeat domains); the interaction inhibits Wnt-mediated signaling. Interacts with LRP6.

Its subcellular location is the secreted. It is found in the extracellular space. The protein resides in the extracellular matrix. Negative regulator of bone growth that acts through inhibition of Wnt signaling and bone formation. The protein is Sclerostin of Chlorocebus aethiops (Green monkey).